The chain runs to 262 residues: Adenosylcobinamide-GDP ribazoletransferase (262 aa).

5 helical membrane passes run 41–63, 68–85, 115–134, 141–163, and 201–221; these read AFPFAGLAIALPSAAVAMALMAL, LFAAFVVVAIQALVTGAL, IGTYAAVALILSFGLRVSAF, FSPLGAAMAILGAACLSRAAMVW, and LLFYLAQVPALGVIAALVAFL.

Belongs to the CobS family. In terms of assembly, associated with a large complex of proteins. Mg(2+) serves as cofactor.

The protein localises to the cell inner membrane. It carries out the reaction alpha-ribazole + adenosylcob(III)inamide-GDP = adenosylcob(III)alamin + GMP + H(+). The enzyme catalyses alpha-ribazole 5'-phosphate + adenosylcob(III)inamide-GDP = adenosylcob(III)alamin 5'-phosphate + GMP + H(+). It functions in the pathway cofactor biosynthesis; adenosylcobalamin biosynthesis; adenosylcobalamin from cob(II)yrinate a,c-diamide: step 7/7. In terms of biological role, joins adenosylcobinamide-GDP and alpha-ribazole to generate adenosylcobalamin (Ado-cobalamin). Also synthesizes adenosylcobalamin 5'-phosphate from adenosylcobinamide-GDP and alpha-ribazole 5'-phosphate. This is Adenosylcobinamide-GDP ribazoletransferase (cobV) from Sinorhizobium sp.